The following is a 298-amino-acid chain: ATP synthase gamma chain (298 aa).

The protein belongs to the ATPase gamma chain family. In terms of assembly, F-type ATPases have 2 components, CF(1) - the catalytic core - and CF(0) - the membrane proton channel. CF(1) has five subunits: alpha(3), beta(3), gamma(1), delta(1), epsilon(1). CF(0) has three main subunits: a, b and c.

The protein resides in the cell inner membrane. Produces ATP from ADP in the presence of a proton gradient across the membrane. The gamma chain is believed to be important in regulating ATPase activity and the flow of protons through the CF(0) complex. This chain is ATP synthase gamma chain, found in Zymomonas mobilis subsp. mobilis (strain ATCC 31821 / ZM4 / CP4).